A 73-amino-acid chain; its full sequence is Cytoplasmic envelopment protein 3 (73 aa).

Residue G2 is the site of N-myristoyl glycine; by host attachment.

It belongs to the herpesviridae cytoplasmic envelopment protein 3 family. Interacts with cytoplasmic envelopment protein 2; this interaction is essential for the proper localization of each protein to the assembly complex and thus for the production of infectious virus. Myristoylation and palmitoylation (probably on one or more of the nearby cysteines at the N-terminus) enable membrane-binding and Golgi apparatus-specific targeting and are essential for efficient packaging. Post-translationally, phosphorylated. Phosphorylation does not seem to be required for recycling to the host Golgi apparatus. Packaging is selective for underphosphorylated forms.

The protein resides in the virion tegument. Its subcellular location is the virion membrane. The protein localises to the host cell membrane. It is found in the host Golgi apparatus membrane. Its function is as follows. Plays an important role in the cytoplasmic envelopment of tegument proteins and capsids during the assembly and egress processes. Also participates in viral entry at the fusion step probably by regulating the core fusion machinery. The protein is Cytoplasmic envelopment protein 3 (U71) of Homo sapiens (Human).